Reading from the N-terminus, the 271-residue chain is Mannosyl-3-phosphoglycerate phosphatase (271 aa).

The Nucleophile role is filled by aspartate 13. Residues aspartate 13, aspartate 15, and aspartate 214 each coordinate Mg(2+).

The protein belongs to the HAD-like hydrolase superfamily. MPGP family. Requires Mg(2+) as cofactor.

It is found in the cytoplasm. It carries out the reaction 2-O-(alpha-D-mannosyl)-3-phosphoglycerate + H2O = (2R)-2-O-(alpha-D-mannosyl)-glycerate + phosphate. This chain is Mannosyl-3-phosphoglycerate phosphatase, found in Escherichia coli O127:H6 (strain E2348/69 / EPEC).